The sequence spans 480 residues: tRNA-2-methylthio-N(6)-dimethylallyladenosine synthase (480 aa).

The MTTase N-terminal domain occupies 43-161 (KLYCLNTFGC…FPELLYSAMD (119 aa)). Cys52, Cys88, Cys122, Cys198, Cys202, and Cys205 together coordinate [4Fe-4S] cluster. Residues 184 to 414 (RKDGVKAWVT…LETQNRISKE (231 aa)) form the Radical SAM core domain. In terms of domain architecture, TRAM spans 417 to 480 (DTFLGKVVEV…TWSLEGSIVR (64 aa)).

Belongs to the methylthiotransferase family. MiaB subfamily. Monomer. [4Fe-4S] cluster is required as a cofactor.

The protein localises to the cytoplasm. It catalyses the reaction N(6)-dimethylallyladenosine(37) in tRNA + (sulfur carrier)-SH + AH2 + 2 S-adenosyl-L-methionine = 2-methylsulfanyl-N(6)-dimethylallyladenosine(37) in tRNA + (sulfur carrier)-H + 5'-deoxyadenosine + L-methionine + A + S-adenosyl-L-homocysteine + 2 H(+). Its function is as follows. Catalyzes the methylthiolation of N6-(dimethylallyl)adenosine (i(6)A), leading to the formation of 2-methylthio-N6-(dimethylallyl)adenosine (ms(2)i(6)A) at position 37 in tRNAs that read codons beginning with uridine. In Acetivibrio thermocellus (strain ATCC 27405 / DSM 1237 / JCM 9322 / NBRC 103400 / NCIMB 10682 / NRRL B-4536 / VPI 7372) (Clostridium thermocellum), this protein is tRNA-2-methylthio-N(6)-dimethylallyladenosine synthase.